Here is a 615-residue protein sequence, read N- to C-terminus: 1-deoxy-D-xylulose-5-phosphate synthase (615 aa).

Thiamine diphosphate contacts are provided by residues H76 and 117 to 119 (GHS). D148 is a binding site for Mg(2+). Residues 149–150 (GA), N177, Y284, and E365 contribute to the thiamine diphosphate site. N177 is a binding site for Mg(2+).

The protein belongs to the transketolase family. DXPS subfamily. In terms of assembly, homodimer. The cofactor is Mg(2+). Requires thiamine diphosphate as cofactor.

It catalyses the reaction D-glyceraldehyde 3-phosphate + pyruvate + H(+) = 1-deoxy-D-xylulose 5-phosphate + CO2. Its pathway is metabolic intermediate biosynthesis; 1-deoxy-D-xylulose 5-phosphate biosynthesis; 1-deoxy-D-xylulose 5-phosphate from D-glyceraldehyde 3-phosphate and pyruvate: step 1/1. Its function is as follows. Catalyzes the acyloin condensation reaction between C atoms 2 and 3 of pyruvate and glyceraldehyde 3-phosphate to yield 1-deoxy-D-xylulose-5-phosphate (DXP). The polypeptide is 1-deoxy-D-xylulose-5-phosphate synthase (Francisella tularensis subsp. tularensis (strain FSC 198)).